The following is a 158-amino-acid chain: Pathogenesis-related protein 1 (158 aa).

The protein belongs to the BetVI family.

The protein resides in the cytoplasm. This chain is Pathogenesis-related protein 1 (PR1), found in Asparagus officinalis (Garden asparagus).